A 127-amino-acid chain; its full sequence is Glycine cleavage system H protein 1 (127 aa).

One can recognise a Lipoyl-binding domain in the interval 20–101 (SVTVGITPYA…LGAGWFFRFI (82 aa)). Lys-60 carries the post-translational modification N6-lipoyllysine.

This sequence belongs to the GcvH family. The glycine cleavage system is composed of four proteins: P, T, L and H. The cofactor is (R)-lipoate.

Its function is as follows. The glycine cleavage system catalyzes the degradation of glycine. The H protein shuttles the methylamine group of glycine from the P protein to the T protein. This chain is Glycine cleavage system H protein 1, found in Pseudomonas syringae pv. tomato (strain ATCC BAA-871 / DC3000).